The sequence spans 209 residues: Large ribosomal subunit protein uL3 (209 aa).

The disordered stretch occupies residues 122 to 152 (AIKRHGQSRGPMSHGSRYHRRPGSMGPVDPN).

It belongs to the universal ribosomal protein uL3 family. As to quaternary structure, part of the 50S ribosomal subunit. Forms a cluster with proteins L14 and L19. Interacts with RNA helicase CshA.

One of the primary rRNA binding proteins, it binds directly near the 3'-end of the 23S rRNA, where it nucleates assembly of the 50S subunit. Strongly stimulates 23S rRNA precursor processing by mini-ribonuclease 3 (MrnC); 20-30% DMSO can replace L3, suggesting the protein may alter rRNA conformation. The chain is Large ribosomal subunit protein uL3 from Bacillus subtilis (strain 168).